Here is a 366-residue protein sequence, read N- to C-terminus: Polyprenyl transferase ausN (366 aa).

8 consecutive transmembrane segments (helical) span residues 97 to 117 (VVGI…DLLL), 121 to 141 (LLLT…NDLI), 164 to 184 (LPTA…LFLF), 215 to 235 (LILV…GVEP), 239 to 259 (ILSS…IDLV), 287 to 307 (LAYS…LLGG), 308 to 328 (LRAP…WTFL), and 346 to 366 (SCLM…AVRV).

The protein belongs to the UbiA prenyltransferase family. Mg(2+) serves as cofactor.

The protein resides in the membrane. It catalyses the reaction 3,5-dimethylorsellinate + (2E,6E)-farnesyl diphosphate = (3R)-3-farnesyl-6-hydroxy-2,3,5-trimethyl-4-oxocyclohexa-1,5-diene-1-carboxylate + diphosphate + H(+). It functions in the pathway secondary metabolite biosynthesis; terpenoid biosynthesis. Its function is as follows. Polyprenyl transferase; part of the gene cluster that mediates the biosynthesis of calidodehydroaustin, a fungal meroterpenoid. The first step of the pathway is the synthesis of 3,5-dimethylorsellinic acid by the polyketide synthase ausA. 3,5-dimethylorsellinic acid is then prenylated by the polyprenyl transferase ausN. Further epoxidation by the FAD-dependent monooxygenase ausM and cyclization by the probable terpene cyclase ausL lead to the formation of protoaustinoid A. Protoaustinoid A is then oxidized to spiro-lactone preaustinoid A3 by the combined action of the FAD-binding monooxygenases ausB and ausC, and the dioxygenase ausE. Acid-catalyzed keto-rearrangement and ring contraction of the tetraketide portion of preaustinoid A3 by ausJ lead to the formation of preaustinoid A4. The aldo-keto reductase ausK, with the help of ausH, is involved in the next step by transforming preaustinoid A4 into isoaustinone which is in turn hydroxylated by the P450 monooxygenase ausI to form austinolide. The cytochrome P450 monooxygenase ausG modifies austinolide to austinol. Austinol is further acetylated to austin by the O-acetyltransferase ausP, which spontaneously changes to dehydroaustin. The cytochrome P450 monooxygenase ausR then converts dehydroaustin is into 7-dehydrodehydroaustin. The hydroxylation catalyzed by ausR permits the O-acetyltransferase ausQ to add an additional acetyl group to the molecule, leading to the formation of acetoxydehydroaustin. The short chain dehydrogenase ausT catalyzes the reduction of the double bond present between carbon atoms 1 and 2 to convert 7-dehydrodehydroaustin into 1,2-dihydro-7-hydroxydehydroaustin. AusQ catalyzes not only an acetylation reaction but also the addition of the PKS ausV diketide product to 1,2-dihydro-7-hydroxydehydroaustin, forming precalidodehydroaustin. Finally, the iron/alpha-ketoglutarate-dependent dioxygenase converts precalidodehydroaustin into calidodehydroaustin. The protein is Polyprenyl transferase ausN of Aspergillus calidoustus.